Reading from the N-terminus, the 328-residue chain is Neuronal membrane glycoprotein M6-b (328 aa).

Residues 1-22 (MKPAMETAAEENTEQSQERKVN) are disordered. Residues 71 to 91 (GGVPYASLVATILCFSGVALF) traverse the membrane as a helical segment. N-linked (GlcNAc...) asparagine glycosylation occurs at Asn-113. A run of 2 helical transmembrane segments spans residues 130–150 (VIYG…AEGF) and 176–196 (FVFL…FSAV). A glycan (N-linked (GlcNAc...) asparagine) is linked at Asn-217. Residues 265 to 285 (FIVACAGAGATVIALIHFLMI) form a helical membrane-spanning segment. Phosphoserine occurs at positions 318, 320, and 326.

The protein belongs to the myelin proteolipid protein family. In terms of assembly, interacts with SERT. In terms of tissue distribution, widely expressed. In the brain, expressed in neurons and oligodendrocytes.

It is found in the membrane. Its subcellular location is the cell membrane. In terms of biological role, may be involved in neural development. Involved in regulation of osteoblast function and bone formation. Involved in matrix vesicle release by osteoblasts; this function seems to involve maintenance of the actin cytoskeleton. May be involved in cellular trafficking of SERT and thereby in regulation of serotonin uptake. The protein is Neuronal membrane glycoprotein M6-b (Gpm6b) of Mus musculus (Mouse).